Reading from the N-terminus, the 366-residue chain is sn-glycerol-3-phosphate import ATP-binding protein UgpC (366 aa).

The 232-residue stretch at 4 to 235 (VTLRNVRKTY…PASTFVASFI (232 aa)) folds into the ABC transporter domain. An ATP-binding site is contributed by 37–44 (GPSGCGKS).

The protein belongs to the ABC transporter superfamily. sn-glycerol-3-phosphate importer (TC 3.A.1.1.3) family. In terms of assembly, the complex is composed of two ATP-binding proteins (UgpC), two transmembrane proteins (UgpA and UgpE) and a solute-binding protein (UgpB).

The protein resides in the cell inner membrane. The enzyme catalyses sn-glycerol 3-phosphate(out) + ATP + H2O = sn-glycerol 3-phosphate(in) + ADP + phosphate + H(+). Part of the ABC transporter complex UgpBAEC involved in sn-glycerol-3-phosphate (G3P) import. Responsible for energy coupling to the transport system. This is sn-glycerol-3-phosphate import ATP-binding protein UgpC from Rhodopseudomonas palustris (strain BisB18).